The chain runs to 342 residues: Phosphate acyltransferase (342 aa).

It belongs to the PlsX family. In terms of assembly, homodimer. Probably interacts with PlsY.

Its subcellular location is the cytoplasm. The catalysed reaction is a fatty acyl-[ACP] + phosphate = an acyl phosphate + holo-[ACP]. It functions in the pathway lipid metabolism; phospholipid metabolism. Catalyzes the reversible formation of acyl-phosphate (acyl-PO(4)) from acyl-[acyl-carrier-protein] (acyl-ACP). This enzyme utilizes acyl-ACP as fatty acyl donor, but not acyl-CoA. In Shewanella sp. (strain ANA-3), this protein is Phosphate acyltransferase.